A 379-amino-acid chain; its full sequence is MSDFLPFSRPAMGAEELAAVKTVLDSGWITTGPKNQELEAAFCRLTGNQYAVAVSSATAGMHIALMALGIGEGDEVITPSMTWVSTLNMIVLLGANPVMVDVDRDTLMVTPEHIEAAITPQTKAIIPVHYAGAPADLDAIYALGERYGIPVIEDAAHATGTSYKGRHIGARGTAIFSFHAIKNITCAEGGIVVTDNPQFADKLRSLKFHGLGVDAWDRQSGGRAPQAEVLAPGYKYNLPDLNAAIALAQLQKLDALNARRAAIAAQYHQAMADLPFQPLSLPSWEHIHAWHLFIIRVDEARCGITRDALMASLKTKGIGTGLHFRAAHTQKYYRERFPTLTLPDTEWNSERICSLPLFPDMTESDFDRVITALHQIAGQ.

Lys182 is modified (N6-(pyridoxal phosphate)lysine).

This sequence belongs to the DegT/DnrJ/EryC1 family. ArnB subfamily. As to quaternary structure, homodimer. Pyridoxal 5'-phosphate serves as cofactor.

It catalyses the reaction UDP-4-amino-4-deoxy-beta-L-arabinose + 2-oxoglutarate = UDP-beta-L-threo-pentopyranos-4-ulose + L-glutamate. It functions in the pathway nucleotide-sugar biosynthesis; UDP-4-deoxy-4-formamido-beta-L-arabinose biosynthesis; UDP-4-deoxy-4-formamido-beta-L-arabinose from UDP-alpha-D-glucuronate: step 2/3. Its pathway is bacterial outer membrane biogenesis; lipopolysaccharide biosynthesis. In terms of biological role, catalyzes the conversion of UDP-4-keto-arabinose (UDP-Ara4O) to UDP-4-amino-4-deoxy-L-arabinose (UDP-L-Ara4N). The modified arabinose is attached to lipid A and is required for resistance to polymyxin and cationic antimicrobial peptides. This is UDP-4-amino-4-deoxy-L-arabinose--oxoglutarate aminotransferase from Salmonella heidelberg (strain SL476).